The primary structure comprises 517 residues: Crotonobetaine/carnitine--CoA ligase (517 aa).

Belongs to the ATP-dependent AMP-binding enzyme family.

It carries out the reaction 4-(trimethylamino)butanoate + ATP + CoA = 4-(trimethylamino)butanoyl-CoA + AMP + diphosphate. The catalysed reaction is crotonobetaine + ATP + CoA = crotonobetainyl-CoA + AMP + diphosphate. The enzyme catalyses (R)-carnitine + ATP + CoA = (R)-carnitinyl-CoA + AMP + diphosphate. Its pathway is amine and polyamine metabolism; carnitine metabolism. Functionally, catalyzes the transfer of CoA to carnitine, generating the initial carnitinyl-CoA needed for the CaiB reaction cycle. Also has activity toward crotonobetaine and gamma-butyrobetaine. The polypeptide is Crotonobetaine/carnitine--CoA ligase (Shigella flexneri).